A 125-amino-acid polypeptide reads, in one-letter code: Oxytocin-neurophysin 1 (125 aa).

Residues 1–19 form the signal peptide; it reads MAGSSLACCLLGLLALTSA. Cys-20 and Cys-25 are disulfide-bonded. Gly-28 is modified (glycine amide). 7 disulfide bridges follow: Cys-41/Cys-85, Cys-44/Cys-58, Cys-52/Cys-75, Cys-59/Cys-65, Cys-92/Cys-104, Cys-98/Cys-116, and Cys-105/Cys-110.

It belongs to the vasopressin/oxytocin family. Interacts with oxytocin receptor (Ki=1.5 nM). Interacts with vasopressin V1aR/AVPR1A (Ki=37 nM), V1bR/AVPR1B (Ki=222 nM), and V2R/AVPR2 receptors (Ki=823 nM).

Its subcellular location is the secreted. In terms of biological role, neurophysin 1 specifically binds oxytocin. Functionally, oxytocin causes contraction of the smooth muscle of the uterus and of the mammary gland. Acts by binding to oxytocin receptor (OXTR). The polypeptide is Oxytocin-neurophysin 1 (OXT) (Bos taurus (Bovine)).